The primary structure comprises 294 residues: 4-hydroxy-tetrahydrodipicolinate synthase (294 aa).

Pyruvate is bound at residue T45. The Proton donor/acceptor role is filled by Y133. Catalysis depends on K161, which acts as the Schiff-base intermediate with substrate. I203 provides a ligand contact to pyruvate.

Belongs to the DapA family. In terms of assembly, homotetramer; dimer of dimers.

The protein resides in the cytoplasm. It catalyses the reaction L-aspartate 4-semialdehyde + pyruvate = (2S,4S)-4-hydroxy-2,3,4,5-tetrahydrodipicolinate + H2O + H(+). Its pathway is amino-acid biosynthesis; L-lysine biosynthesis via DAP pathway; (S)-tetrahydrodipicolinate from L-aspartate: step 3/4. Catalyzes the condensation of (S)-aspartate-beta-semialdehyde [(S)-ASA] and pyruvate to 4-hydroxy-tetrahydrodipicolinate (HTPA). This Shewanella sp. (strain ANA-3) protein is 4-hydroxy-tetrahydrodipicolinate synthase.